The sequence spans 95 residues: Putative defensin-like protein 262 (95 aa).

A signal peptide spans M1–A26. 4 cysteine pairs are disulfide-bonded: C48–C95, C64–C83, C70–C91, and C74–C93.

This sequence belongs to the DEFL family.

It localises to the secreted. The protein is Putative defensin-like protein 262 of Arabidopsis thaliana (Mouse-ear cress).